A 576-amino-acid chain; its full sequence is MLKHPATKYRPFPPIALPDRTWPSKTLTRAPIWMSTDLRDGNQALFEPMNAERKMRMFKMLVQIGFKEIEAAFPAASQTDYDFVRELIEGGHIPDDVTIEVLTQAREDLIRRTMESLRGARRAIIHVYNATSPVFRRTVFNTDREGVKRIAVESAKLIREIAESMPETQWTYQYSPEVFSGTELDFALEVCNAVTEAWDPTPAHKIIFNLPATVEMATPNVYADQIEWMHRHLARRDSILLSVHPHNDRGTAVAAAELAVMAGADRVEGCLFGNGERTGNVDLVTLALNLYSQGIDPGLDFSHVNDVARTCEDCTQLPVHPRHPYVGDLVFTAFSGSHQDAIKKGFAVQKPDAIWEMPYLPIDPADVGRTYDSIIRVNSQSGKGGVAYLLESGYGIAMPRRLQVEFSSTVQQLTDASGREATAADIWALFQETYLRADGPIGYVSHRLAERDDGSQHIRLVVNIADREHVCEGVGNGPLDALVQALAAVLAAPVSIHHYEERALGQGANADAIAFAELAAPGVAGSVFGVGIDANLTTASIRAVVGGVNRLAARHAQAQPGQSLLRRGMAPSMELA.

The Pyruvate carboxyltransferase domain maps to 31–305 (PIWMSTDLRD…DPGLDFSHVN (275 aa)). The Mg(2+) site is built by D40, H244, H246, and N280. Positions 437 to 576 (ADGPIGYVSH…RGMAPSMELA (140 aa)) are regulatory domain.

It belongs to the alpha-IPM synthase/homocitrate synthase family. LeuA type 2 subfamily. As to quaternary structure, homodimer. Mg(2+) serves as cofactor.

It is found in the cytoplasm. The catalysed reaction is 3-methyl-2-oxobutanoate + acetyl-CoA + H2O = (2S)-2-isopropylmalate + CoA + H(+). Its pathway is amino-acid biosynthesis; L-leucine biosynthesis; L-leucine from 3-methyl-2-oxobutanoate: step 1/4. Its function is as follows. Catalyzes the condensation of the acetyl group of acetyl-CoA with 3-methyl-2-oxobutanoate (2-ketoisovalerate) to form 3-carboxy-3-hydroxy-4-methylpentanoate (2-isopropylmalate). The protein is 2-isopropylmalate synthase of Ralstonia nicotianae (strain ATCC BAA-1114 / GMI1000) (Ralstonia solanacearum).